Reading from the N-terminus, the 184-residue chain is ATP synthase subunit delta (184 aa).

It belongs to the ATPase delta chain family. As to quaternary structure, F-type ATPases have 2 components, F(1) - the catalytic core - and F(0) - the membrane proton channel. F(1) has five subunits: alpha(3), beta(3), gamma(1), delta(1), epsilon(1). F(0) has three main subunits: a(1), b(2) and c(10-14). The alpha and beta chains form an alternating ring which encloses part of the gamma chain. F(1) is attached to F(0) by a central stalk formed by the gamma and epsilon chains, while a peripheral stalk is formed by the delta and b chains.

It is found in the cell inner membrane. F(1)F(0) ATP synthase produces ATP from ADP in the presence of a proton or sodium gradient. F-type ATPases consist of two structural domains, F(1) containing the extramembraneous catalytic core and F(0) containing the membrane proton channel, linked together by a central stalk and a peripheral stalk. During catalysis, ATP synthesis in the catalytic domain of F(1) is coupled via a rotary mechanism of the central stalk subunits to proton translocation. Functionally, this protein is part of the stalk that links CF(0) to CF(1). It either transmits conformational changes from CF(0) to CF(1) or is implicated in proton conduction. The chain is ATP synthase subunit delta from Caulobacter sp. (strain K31).